Here is a 155-residue protein sequence, read N- to C-terminus: Transcription antitermination protein NusB (155 aa).

The protein belongs to the NusB family.

In terms of biological role, involved in transcription antitermination. Required for transcription of ribosomal RNA (rRNA) genes. Binds specifically to the boxA antiterminator sequence of the ribosomal RNA (rrn) operons. This is Transcription antitermination protein NusB from Vibrio parahaemolyticus serotype O3:K6 (strain RIMD 2210633).